A 140-amino-acid chain; its full sequence is Nucleoside diphosphate kinase (140 aa).

Residues Lys11, Phe59, Arg87, Thr93, Arg104, and Asn114 each coordinate ATP. His117 (pros-phosphohistidine intermediate) is an active-site residue.

The protein belongs to the NDK family. In terms of assembly, homotetramer. Mg(2+) serves as cofactor.

Its subcellular location is the cytoplasm. The enzyme catalyses a 2'-deoxyribonucleoside 5'-diphosphate + ATP = a 2'-deoxyribonucleoside 5'-triphosphate + ADP. It carries out the reaction a ribonucleoside 5'-diphosphate + ATP = a ribonucleoside 5'-triphosphate + ADP. Major role in the synthesis of nucleoside triphosphates other than ATP. The ATP gamma phosphate is transferred to the NDP beta phosphate via a ping-pong mechanism, using a phosphorylated active-site intermediate. The protein is Nucleoside diphosphate kinase of Bartonella tribocorum (strain CIP 105476 / IBS 506).